The following is a 294-amino-acid chain: Undecaprenyl-diphosphatase (294 aa).

Helical transmembrane passes span 2–22 (SMIYITLNIIAYVIDVRSLIL), 27–47 (LVFSLILGIVEGLTEFLPISS), 65–85 (VIAFTVIIQLGAILSITKIFW), 110–130 (LCIRHIFLGTFPGIMLGMIFY), 135–155 (LIFELTYIMYGLIIGGIFLLV), 172–192 (ITYLQAFLIGCFQCLAFWPGF), 215–235 (FSFFLAVPIIFGSAVLTLYHY), 239–259 (IGLMDVLLLIAGSATAFFIAL), and 272–292 (VSLIPFAIYRFLLAGGIYWGL).

It belongs to the UppP family.

Its subcellular location is the cell inner membrane. It catalyses the reaction di-trans,octa-cis-undecaprenyl diphosphate + H2O = di-trans,octa-cis-undecaprenyl phosphate + phosphate + H(+). In terms of biological role, catalyzes the dephosphorylation of undecaprenyl diphosphate (UPP). Confers resistance to bacitracin. The protein is Undecaprenyl-diphosphatase of Blochmanniella pennsylvanica (strain BPEN).